We begin with the raw amino-acid sequence, 309 residues long: Elongation factor Ts (309 aa).

An involved in Mg(2+) ion dislocation from EF-Tu region spans residues 80-83; it reads TDFV.

Belongs to the EF-Ts family.

It localises to the cytoplasm. In terms of biological role, associates with the EF-Tu.GDP complex and induces the exchange of GDP to GTP. It remains bound to the aminoacyl-tRNA.EF-Tu.GTP complex up to the GTP hydrolysis stage on the ribosome. The protein is Elongation factor Ts of Rhodospirillum rubrum (strain ATCC 11170 / ATH 1.1.1 / DSM 467 / LMG 4362 / NCIMB 8255 / S1).